Here is a 51-residue protein sequence, read N- to C-terminus: Insulin (51 aa).

Cystine bridges form between Cys8–Cys37, Cys20–Cys50, and Cys36–Cys41.

This sequence belongs to the insulin family. Heterodimer of a B chain and an A chain linked by two disulfide bonds.

The protein resides in the secreted. In terms of biological role, insulin decreases blood glucose concentration. It increases cell permeability to monosaccharides, amino acids and fatty acids. It accelerates glycolysis, the pentose phosphate cycle, and glycogen synthesis in liver. The sequence is that of Insulin from Seriola quinqueradiata (Five-ray yellowtail).